The sequence spans 3916 residues: Fusarin C synthetase (3916 aa).

The Ketosynthase family 3 (KS3) domain occupies 9–440; sequence KEPIAIIGTS…GTNVHAIIEQ (432 aa). Catalysis depends on for beta-ketoacyl synthase activity residues Cys182, His319, and His360. Positions 548–869 are malonyl-CoA:ACP transacylase (MAT) domain; sequence VFTGQGAQWP…VTRNIHDVEA (322 aa). An N-terminal hotdog fold region spans residues 935–1068; the sequence is HPLLGARSVE…GQLRVEFSSL (134 aa). The tract at residues 935-1228 is dehydratase (DH) domain; the sequence is HPLLGARSVE…GLTCTSLLRP (294 aa). A PKS/mFAS DH domain is found at 935–1231; sequence HPLLGARSVE…CTSLLRPGPS (297 aa). The active-site Proton acceptor; for dehydratase activity is the His967. The segment at 1084 to 1231 is C-terminal hotdog fold; the sequence is LTSVDMERFY…CTSLLRPGPS (148 aa). Asp1141 serves as the catalytic Proton donor; for dehydratase activity. A C-methyltransferase (CMeT) domain region spans residues 1350 to 1584; the sequence is VGENLPAVVR…YMTSVMLSQA (235 aa). A ketoreductase (KR) domain 1 region spans residues 2092 to 2266; it reads TYLLIGFTGG…AASVMHIGMV (175 aa). In terms of domain architecture, Carrier 1 spans 2372-2449; that stretch reads EILAVVEEEF…ELCSTVVSHL (78 aa). Position 2409 is an O-(pantetheine 4'-phosphoryl)serine (Ser2409). The segment at 2482–2511 is disordered; it reads ASPTENEPFTIRNSPNSTQVTSESGVDEET. Positions 2486–2505 are enriched in polar residues; sequence ENEPFTIRNSPNSTQVTSES. The segment at 2522–2806 is condensation; that stretch reads PLSFAQERLW…VNLLPLRLKL (285 aa). Residues 2973–3385 are adenylation; it reads FEKCVVNQPD…RIAGDSQIKL (413 aa). Positions 3493–3570 constitute a Carrier 2 domain; it reads KPLTETQERL…EMAAKIDGFT (78 aa). Ser3530 bears the O-(pantetheine 4'-phosphoryl)serine mark. The segment at 3612-3833 is thiolester reductase (R) domain; it reads LTGATGFLGV…DFVPVDVVAA (222 aa).

This sequence in the C-terminal section; belongs to the NRP synthetase family.

It participates in mycotoxin biosynthesis. Its function is as follows. Fusarin C synthetase; part of the gene cluster that mediates the biosynthesis of the mycotoxin fusarin C. Within the cluster, FUS1, FUS2, FUS8 and FUS9 are sufficient for fusarin production. The roles of the other FUS members are yet undetermined. The fusarin C synthetase FUS1 is responsible for the condensation of one acetyl-coenzyme A (CoA) unit with six malonyl-CoA units and the amide linkage of the arising heptaketide and homoserine, subsequently releasing the first intermediate, prefusarin, as an alcohol with an open ring structure. The cytochrome P450 monooxygenase FUS8 participates in multiple oxidation processes at carbon C-20 and is able to use the FUS1 product as substrate, resulting in formation of 20-hydroxy-prefusarin. This reaction seems to be essential before the 2-pyrrolidone ring closure can be catalyzed by FUS2, generating 20-hydroxy-fusarin. FUS8 is able to further oxidizes carbon C-20 after ring closure, resulting in the formation of carboxy-fusarin C. As the last step, FUS9 methylates the hydroxyl group at C-21 to generate fusarin C. Fusarin C can then rearrange to epi-fusarin C, the (z)-isomers, and fusarin A and fusarin D. This chain is Fusarin C synthetase, found in Gibberella moniliformis (strain M3125 / FGSC 7600) (Maize ear and stalk rot fungus).